Reading from the N-terminus, the 274-residue chain is Putative pyruvate, phosphate dikinase regulatory protein 1 (274 aa).

Position 149-156 (149-156 (GISRTSKT)) interacts with ADP.

The protein belongs to the pyruvate, phosphate/water dikinase regulatory protein family. PDRP subfamily.

It catalyses the reaction N(tele)-phospho-L-histidyl/L-threonyl-[pyruvate, phosphate dikinase] + ADP = N(tele)-phospho-L-histidyl/O-phospho-L-threonyl-[pyruvate, phosphate dikinase] + AMP + H(+). The enzyme catalyses N(tele)-phospho-L-histidyl/O-phospho-L-threonyl-[pyruvate, phosphate dikinase] + phosphate + H(+) = N(tele)-phospho-L-histidyl/L-threonyl-[pyruvate, phosphate dikinase] + diphosphate. Bifunctional serine/threonine kinase and phosphorylase involved in the regulation of the pyruvate, phosphate dikinase (PPDK) by catalyzing its phosphorylation/dephosphorylation. The sequence is that of Putative pyruvate, phosphate dikinase regulatory protein 1 from Listeria welshimeri serovar 6b (strain ATCC 35897 / DSM 20650 / CCUG 15529 / CIP 8149 / NCTC 11857 / SLCC 5334 / V8).